Reading from the N-terminus, the 307-residue chain is Type 2A encapsulin shell protein (307 aa).

Belongs to the encapsulin family. Family 2A subfamily. The encapsulin nanocompartment is formed by 60 subunits; monomers form pentamers which assemble to form shells. There are 12 charged pores where the pentamers meet as well as 3-fold axis channels and dimer channels. Isolated from bacteria in a complex with cysteine desulfurase (AC Q9KII6).

The protein localises to the encapsulin nanocompartment. It localises to the cell membrane. Shell component of a type 2A encapsulin nanocompartment. Forms encapsulin nanocompartments about 24 nm in diameter from 60 monomers, probably involved in sulfur metabolism. Probably encapsulates cysteine desulfurase. The protein is Type 2A encapsulin shell protein of Mycolicibacterium paratuberculosis (strain ATCC BAA-968 / K-10) (Mycobacterium paratuberculosis).